An 873-amino-acid polypeptide reads, in one-letter code: Polyribonucleotide nucleotidyltransferase (873 aa).

Positions 521 and 527 each coordinate Mg(2+). Residues 587–646 (PRIITTTVPVDKIGEVIGPKGKMINQIQEDTGAEIAIEDDGTVYISSEGGEAAEKAKQII) form the KH domain. One can recognise an S1 motif domain in the interval 658-730 (GETYKGTVVK…DRGKISLAIP (73 aa)). A disordered region spans residues 727–873 (LAIPGFENQE…VRRDFDPFDD (147 aa)). The span at 742–857 (RRSDDRPRRD…EYREGREVRH (116 aa)) shows a compositional bias: basic and acidic residues.

It belongs to the polyribonucleotide nucleotidyltransferase family. Mg(2+) serves as cofactor.

Its subcellular location is the cytoplasm. The catalysed reaction is RNA(n+1) + phosphate = RNA(n) + a ribonucleoside 5'-diphosphate. Involved in mRNA degradation. Catalyzes the phosphorolysis of single-stranded polyribonucleotides processively in the 3'- to 5'-direction. In Bifidobacterium animalis subsp. lactis (strain AD011), this protein is Polyribonucleotide nucleotidyltransferase.